The primary structure comprises 116 residues: Putative pterin-4-alpha-carbinolamine dehydratase (116 aa).

It belongs to the pterin-4-alpha-carbinolamine dehydratase family.

It carries out the reaction (4aS,6R)-4a-hydroxy-L-erythro-5,6,7,8-tetrahydrobiopterin = (6R)-L-erythro-6,7-dihydrobiopterin + H2O. The chain is Putative pterin-4-alpha-carbinolamine dehydratase from Stenotrophomonas maltophilia (strain K279a).